Reading from the N-terminus, the 479-residue chain is MASTATCTRFTDEYQLFEELGKGAFSVVRRCMKITTGQEYAAKIINTKKLSARDHQKLEREARICRLLKHPNIVRLHDSISEEGFHYLVFDLVTGGELFEDIVAREYYSEADASHCIQQILESVNHCHLNGIVHRDLKPENLLLASKSKGAAVKLADFGLAIEVQGEQQAWFGFAGTPGYLSPEVLRKDPYGKPVDMWACGVILYILLVGYPPFWDEDQHRLYQQIKAGAYDFPSPEWDTVTPEAKDLINKMLTINPAKRITASEALKHPWICQRSTVASMMHRQETVDCLKKFNARRKLKGAILTTMLATRNFSAAKSLLKKPDGVKESTESSNTTIEDEDVKARKQEIIKVTEQLIEAINNGDFEAYTKICDPGLTSFEPEALGNLVEGMDFHRFYFENALSKSNKPIHTIILNPHVHLVGDDAACIAYIRLTQYMDGTGMPKTMQSEETRVWHRRDGKWQNVHFHRSGSPTVPINA.

The Protein kinase domain occupies 14–272 (YQLFEELGKG…ASEALKHPWI (259 aa)). Residues 20–28 (LGKGAFSVV) and K43 each bind ATP. D136 serves as the catalytic Proton acceptor. The residue at position 287 (T287) is a Phosphothreonine. 2 positions are modified to phosphoserine: S315 and S319. The residue at position 337 (T337) is a Phosphothreonine.

This sequence belongs to the protein kinase superfamily. CAMK Ser/Thr protein kinase family. CaMK subfamily. In terms of assembly, CAMK2 is composed of four different chains: alpha, beta, gamma, and delta. The different isoforms assemble into homo- or heteromultimeric holoenzymes composed of 8 to 12 subunits.

The catalysed reaction is L-seryl-[protein] + ATP = O-phospho-L-seryl-[protein] + ADP + H(+). It carries out the reaction L-threonyl-[protein] + ATP = O-phospho-L-threonyl-[protein] + ADP + H(+). Its activity is regulated as follows. Autophosphorylation of CAMK2 plays an important role in the regulation of the kinase activity. In terms of biological role, caM-kinase II (CAMK2) is a prominent kinase in the central nervous system. This chain is Calcium/calmodulin-dependent protein kinase type II delta chain (CAMK2D), found in Gallus gallus (Chicken).